The primary structure comprises 164 residues: UPF0178 protein RPD_2254 (164 aa).

The protein belongs to the UPF0178 family.

The chain is UPF0178 protein RPD_2254 from Rhodopseudomonas palustris (strain BisB5).